The primary structure comprises 486 residues: Aspartyl/glutamyl-tRNA(Asn/Gln) amidotransferase subunit B (486 aa).

The protein belongs to the GatB/GatE family. GatB subfamily. In terms of assembly, heterotrimer of A, B and C subunits.

The catalysed reaction is L-glutamyl-tRNA(Gln) + L-glutamine + ATP + H2O = L-glutaminyl-tRNA(Gln) + L-glutamate + ADP + phosphate + H(+). It carries out the reaction L-aspartyl-tRNA(Asn) + L-glutamine + ATP + H2O = L-asparaginyl-tRNA(Asn) + L-glutamate + ADP + phosphate + 2 H(+). Allows the formation of correctly charged Asn-tRNA(Asn) or Gln-tRNA(Gln) through the transamidation of misacylated Asp-tRNA(Asn) or Glu-tRNA(Gln) in organisms which lack either or both of asparaginyl-tRNA or glutaminyl-tRNA synthetases. The reaction takes place in the presence of glutamine and ATP through an activated phospho-Asp-tRNA(Asn) or phospho-Glu-tRNA(Gln). This Orientia tsutsugamushi (strain Boryong) (Rickettsia tsutsugamushi) protein is Aspartyl/glutamyl-tRNA(Asn/Gln) amidotransferase subunit B.